The following is a 286-amino-acid chain: Bifunctional protein FolD (286 aa).

Residues 165-167 (GRS), S190, and V231 each bind NADP(+).

Belongs to the tetrahydrofolate dehydrogenase/cyclohydrolase family. Homodimer.

The enzyme catalyses (6R)-5,10-methylene-5,6,7,8-tetrahydrofolate + NADP(+) = (6R)-5,10-methenyltetrahydrofolate + NADPH. It carries out the reaction (6R)-5,10-methenyltetrahydrofolate + H2O = (6R)-10-formyltetrahydrofolate + H(+). The protein operates within one-carbon metabolism; tetrahydrofolate interconversion. Its function is as follows. Catalyzes the oxidation of 5,10-methylenetetrahydrofolate to 5,10-methenyltetrahydrofolate and then the hydrolysis of 5,10-methenyltetrahydrofolate to 10-formyltetrahydrofolate. This Bacillus cereus (strain AH187) protein is Bifunctional protein FolD.